A 94-amino-acid chain; its full sequence is Large ribosomal subunit protein uL23 (94 aa).

Belongs to the universal ribosomal protein uL23 family. In terms of assembly, part of the 50S ribosomal subunit. Contacts protein L29, and trigger factor when it is bound to the ribosome.

Functionally, one of the early assembly proteins it binds 23S rRNA. One of the proteins that surrounds the polypeptide exit tunnel on the outside of the ribosome. Forms the main docking site for trigger factor binding to the ribosome. The polypeptide is Large ribosomal subunit protein uL23 (Trichlorobacter lovleyi (strain ATCC BAA-1151 / DSM 17278 / SZ) (Geobacter lovleyi)).